A 264-amino-acid polypeptide reads, in one-letter code: Small ribosomal subunit protein uS2 (264 aa).

The disordered stretch occupies residues 222 to 246 (GRSENKDEQNEQGEQIAPVTNEEKQ).

The protein belongs to the universal ribosomal protein uS2 family.

The chain is Small ribosomal subunit protein uS2 from Helicobacter hepaticus (strain ATCC 51449 / 3B1).